We begin with the raw amino-acid sequence, 462 residues long: MTIFSRIPKVDRILEQDEVRRLLADHPRPTVLAAVRTALDALRAEARAGSLREQDLADGAVAGRVGREVARSTACSLRRVVNGTGVVIHTNLGRSPLAERVRQRVDDTAYGYSNLEFDLERGERGSRYSHVEKLLCELTGAEAALVVNNNAAAVLLALSALAGGKEVIVSRGELVEIGGSFRIPDVMQQGGAVLREVGTTNRTHSRDYRQAVTSETGLLLKVHSSNFAVVGFTAEVTAPEMVAIGRELGLPVMADIGSGCLIDLSRFGIRGEPTVQEFVSVGVDVVTFSGDKLLGGPQAGIIVGRKAYVDPLKKHPLLRAIRIDKLTLAALEGTLRLYRDERQALAEVPTLRMLTASAEELRLRARQFMRRLRRGVPSSVRLASLDGVSQVGGGAYPLLELPTTLIAVDVDGVSPQEMEARLRRMTVPVVGRINRGRFLLDARTLLDDDAPAVISALRELAS.

Position 292 is an N6-(pyridoxal phosphate)lysine (Lys292).

This sequence belongs to the SelA family. The cofactor is pyridoxal 5'-phosphate.

The protein resides in the cytoplasm. It catalyses the reaction L-seryl-tRNA(Sec) + selenophosphate + H(+) = L-selenocysteinyl-tRNA(Sec) + phosphate. Its pathway is aminoacyl-tRNA biosynthesis; selenocysteinyl-tRNA(Sec) biosynthesis; selenocysteinyl-tRNA(Sec) from L-seryl-tRNA(Sec) (bacterial route): step 1/1. In terms of biological role, converts seryl-tRNA(Sec) to selenocysteinyl-tRNA(Sec) required for selenoprotein biosynthesis. In Geobacter sulfurreducens (strain ATCC 51573 / DSM 12127 / PCA), this protein is L-seryl-tRNA(Sec) selenium transferase.